The primary structure comprises 65 residues: Lantibiotic lacticin 3147 A2 (65 aa).

The propeptide occupies 1-36 (MKEKNMKKNDTIELQLGKYLEDDMIELAEGDESHGG). The residue at position 37 (T37) is a 2-oxobutanoic acid. A 2,3-didehydrobutyrine mark is found at T38 and T41. S45 and S48 each carry 2,3-didehydroalanine (Ser). The lanthionine (Ser-Cys) cross-link spans 52–56 (STNTC). 2 cross-links (beta-methyllanthionine (Thr-Cys)) span residues 58 to 61 (TTKC) and 62 to 65 (TRAC).

In terms of processing, maturation of lantibiotics involves the enzymatic conversion of Thr, and Ser into dehydrated AA and the formation of thioether bonds with cysteine. This is followed by membrane translocation and cleavage of the modified precursor. Post-translationally, it is not established whether the 2,3-didehydrobutyrines are the E- or Z-isomers. In the NMR model they were assumed to be the Z-isomer.

The protein localises to the secreted. Functionally, lanthionine-containing peptide antibiotic (lantibiotic) active on Gram-positive bacteria. The bactericidal activity of lantibiotics is based on depolarization of energized bacterial cytoplasmic membranes, initiated by the formation of aqueous transmembrane pores. When present individually lacticin 3147 A2 exhibits weak activity towards L.lactis strain AM2 and L.lactis strain HP, and no activity towards L.lactis strain IFPL359, but when combined with lacticin 3147 A1 it displays strong activity towards all three strains. The sequence is that of Lantibiotic lacticin 3147 A2 from Lactococcus lactis subsp. lactis (Streptococcus lactis).